The primary structure comprises 235 residues: Uridylate kinase (235 aa).

8-11 (KFSG) contacts ATP. Residues 16-21 (GKEGYG) form an involved in allosteric activation by GTP region. Glycine 50 provides a ligand contact to UMP. Residues glycine 51 and arginine 55 each coordinate ATP. Residues aspartate 71 and 132-139 (TGNPYFTT) each bind UMP. The ATP site is built by threonine 159, tyrosine 165, and aspartate 168.

It belongs to the UMP kinase family. As to quaternary structure, homohexamer.

It localises to the cytoplasm. It carries out the reaction UMP + ATP = UDP + ADP. The protein operates within pyrimidine metabolism; CTP biosynthesis via de novo pathway; UDP from UMP (UMPK route): step 1/1. With respect to regulation, allosterically activated by GTP. Inhibited by UTP. In terms of biological role, catalyzes the reversible phosphorylation of UMP to UDP. This Sulfurovum sp. (strain NBC37-1) protein is Uridylate kinase.